The primary structure comprises 232 residues: Ubiquinone biosynthesis O-methyltransferase (232 aa).

Residues arginine 36, glycine 55, aspartate 76, and methionine 120 each coordinate S-adenosyl-L-methionine.

Belongs to the methyltransferase superfamily. UbiG/COQ3 family.

It catalyses the reaction a 3-demethylubiquinol + S-adenosyl-L-methionine = a ubiquinol + S-adenosyl-L-homocysteine + H(+). The enzyme catalyses a 3-(all-trans-polyprenyl)benzene-1,2-diol + S-adenosyl-L-methionine = a 2-methoxy-6-(all-trans-polyprenyl)phenol + S-adenosyl-L-homocysteine + H(+). It functions in the pathway cofactor biosynthesis; ubiquinone biosynthesis. O-methyltransferase that catalyzes the 2 O-methylation steps in the ubiquinone biosynthetic pathway. This chain is Ubiquinone biosynthesis O-methyltransferase, found in Paraburkholderia phymatum (strain DSM 17167 / CIP 108236 / LMG 21445 / STM815) (Burkholderia phymatum).